Consider the following 547-residue polypeptide: Chaperonin GroEL 2 (547 aa).

ATP-binding positions include 30 to 33 (TLGP), lysine 51, 87 to 91 (DGTTT), glycine 415, 479 to 481 (NAA), and aspartate 495. Residues 525-547 (PKEESAAPAGGGMGGMGGMGGMM) form a disordered region. Positions 533–547 (AGGGMGGMGGMGGMM) are enriched in gly residues.

It belongs to the chaperonin (HSP60) family. As to quaternary structure, forms a cylinder of 14 subunits composed of two heptameric rings stacked back-to-back. Interacts with the co-chaperonin GroES.

It is found in the cytoplasm. It catalyses the reaction ATP + H2O + a folded polypeptide = ADP + phosphate + an unfolded polypeptide.. Together with its co-chaperonin GroES, plays an essential role in assisting protein folding. The GroEL-GroES system forms a nano-cage that allows encapsulation of the non-native substrate proteins and provides a physical environment optimized to promote and accelerate protein folding. The protein is Chaperonin GroEL 2 of Anaeromyxobacter dehalogenans (strain 2CP-C).